Consider the following 172-residue polypeptide: Transcriptional activator protein (172 aa).

The Nuclear localization signal signature appears at 56–71 (KAQHRIAKHKAIRRRR). A zinc finger spans residues 76–93 (CGCSIFYHIKCADHGFTH). The segment at 119–172 (DHAGGRSSIHTDKDIPHPSQVQSQPQESTGSPQSIPELPSLDDIDSSFWDDIFK) is disordered. A compositionally biased stretch (polar residues) spans 137 to 152 (SQVQSQPQESTGSPQS). A transactivation region spans residues 158–172 (SLDDIDSSFWDDIFK).

This sequence belongs to the geminiviridae transcriptional activator protein family. In terms of assembly, monomer. Homodimer. Homooligomer. Self-interaction correlates with nuclear localization and efficient activation of transcription. Monomers suppress local silencing by interacting with and inactivating host adenosine kinase 2 (ADK2) in the cytoplasm. Interacts with and inhibits host SNF1 kinase. Binds to ssDNA. Phosphorylated.

It localises to the host nucleus. The protein resides in the host cytoplasm. Its function is as follows. Strong activator of the late viral genes promoters. Enhances the expression of the capsid protein and nuclear shuttle protein. Acts as a suppressor of RNA-mediated gene silencing, also known as post-transcriptional gene silencing (PTGS), a mechanism of plant viral defense that limits the accumulation of viral RNAs. Suppresses the host RNA silencing by inhibiting adenosine kinase 2 (ADK2), a kinase involved in a general methylation pathway. Also suppresses the host basal defense by interacting with and inhibiting SNF1 kinase, a key regulator of cell metabolism implicated in innate antiviral defense. Determines pathogenicity. The polypeptide is Transcriptional activator protein (Bean golden yellow mosaic virus (isolate Puerto Rico-Japan) (BGYMV)).